The sequence spans 279 residues: Small ribosomal subunit protein uS2 (279 aa).

Acidic residues-rich tracts occupy residues 1 to 18 (MTEN…DEAV), 28 to 42 (TATE…DESN), and 65 to 81 (ADAE…FDED). The tract at residues 1-81 (MTENDNEVVE…ELEGPTFDED (81 aa)) is disordered.

The protein belongs to the universal ribosomal protein uS2 family.

The protein is Small ribosomal subunit protein uS2 of Haloquadratum walsbyi (strain DSM 16790 / HBSQ001).